The following is a 322-amino-acid chain: Arginase-1 (322 aa).

Lysine 17 is subject to N6-succinyllysine. Serine 62 and serine 72 each carry phosphoserine. An N6-succinyllysine modification is found at lysine 75. Positions 101, 124, 126, and 128 each coordinate Mn(2+). Substrate is bound by residues 126–130 (HTDIN) and 137–139 (SGN). Serine 163 bears the Phosphoserine mark. Aspartate 183 is a binding site for substrate. Phosphoserine is present on serine 217. Residues aspartate 232 and aspartate 234 each contribute to the Mn(2+) site. Positions 246 and 277 each coordinate substrate.

It belongs to the arginase family. In terms of assembly, homotrimer. Interacts with CMTM6. Requires Mn(2+) as cofactor. As to expression, within the immune system initially reported to be selectively expressed in granulocytes (polymorphonuclear leukocytes [PMNs]). Also detected in macrophages mycobacterial granulomas. Expressed in group2 innate lymphoid cells (ILC2s) during lung disease.

The protein localises to the cytoplasm. It localises to the cytoplasmic granule. The catalysed reaction is L-arginine + H2O = urea + L-ornithine. The protein operates within nitrogen metabolism; urea cycle; L-ornithine and urea from L-arginine: step 1/1. In terms of biological role, key element of the urea cycle converting L-arginine to urea and L-ornithine, which is further metabolized into metabolites proline and polyamides that drive collagen synthesis and bioenergetic pathways critical for cell proliferation, respectively; the urea cycle takes place primarily in the liver and, to a lesser extent, in the kidneys. Its function is as follows. Functions in L-arginine homeostasis in nonhepatic tissues characterized by the competition between nitric oxide synthase (NOS) and arginase for the available intracellular substrate arginine. Arginine metabolism is a critical regulator of innate and adaptive immune responses. Involved in an antimicrobial effector pathway in polymorphonuclear granulocytes (PMN). Upon PMN cell death is liberated from the phagolysosome and depletes arginine in the microenvironment leading to suppressed T cell and natural killer (NK) cell proliferation and cytokine secretion. In group 2 innate lymphoid cells (ILC2s) promotes acute type 2 inflammation in the lung and is involved in optimal ILC2 proliferation but not survival. In humans, the immunological role in the monocytic/macrophage/dendritic cell (DC) lineage is unsure. The sequence is that of Arginase-1 (ARG1) from Homo sapiens (Human).